The sequence spans 287 residues: Orotidine 5'-phosphate decarboxylase (287 aa).

The active-site Proton donor is K99.

Belongs to the OMP decarboxylase family. Type 2 subfamily.

It carries out the reaction orotidine 5'-phosphate + H(+) = UMP + CO2. It participates in pyrimidine metabolism; UMP biosynthesis via de novo pathway; UMP from orotate: step 2/2. This chain is Orotidine 5'-phosphate decarboxylase, found in Clostridium novyi (strain NT).